The following is a 102-amino-acid chain: ATP-dependent Clp protease adapter protein ClpS (102 aa).

It belongs to the ClpS family. As to quaternary structure, binds to the N-terminal domain of the chaperone ClpA.

In terms of biological role, involved in the modulation of the specificity of the ClpAP-mediated ATP-dependent protein degradation. This Aromatoleum aromaticum (strain DSM 19018 / LMG 30748 / EbN1) (Azoarcus sp. (strain EbN1)) protein is ATP-dependent Clp protease adapter protein ClpS.